Consider the following 264-residue polypeptide: TLC domain-containing protein 2 (264 aa).

6 consecutive transmembrane segments (helical) span residues 3-23 (PTGL…HWGL), 42-62 (LCVS…GLSL), 77-97 (WALV…ADLL), 114-134 (VVVS…FSMV), 169-189 (SLAT…LWLF), and 199-219 (LVTL…ILGI). The TLC domain occupies 34 to 227 (RDRWQWWNLC…GIRILVNDVL (194 aa)). The interval 230–264 (RPHPPSPGHEKTRGTRTRRDNGPVTSNSSTLSLKD) is disordered. Basic and acidic residues predominate over residues 237–250 (GHEKTRGTRTRRDN). A compositionally biased stretch (polar residues) spans 252 to 264 (PVTSNSSTLSLKD).

It belongs to the TLCD family.

The protein localises to the cell membrane. Functionally, regulates the composition and fluidity of the plasma membrane. Inhibits the incorporation of membrane-fluidizing phospholipids containing omega-3 long-chain polyunsaturated fatty acids (LCPUFA) and thereby promotes membrane rigidity. Does not appear to have any effect on LCPUFA synthesis. This is TLC domain-containing protein 2 (TLCD2) from Homo sapiens (Human).